The chain runs to 333 residues: Ribosomal protein L11 methyltransferase (333 aa).

S-adenosyl-L-methionine contacts are provided by Thr-160, Gly-181, Asp-203, and Asn-267.

It belongs to the methyltransferase superfamily. PrmA family.

It is found in the cytoplasm. The enzyme catalyses L-lysyl-[protein] + 3 S-adenosyl-L-methionine = N(6),N(6),N(6)-trimethyl-L-lysyl-[protein] + 3 S-adenosyl-L-homocysteine + 3 H(+). Its function is as follows. Methylates ribosomal protein L11. In Lachnoclostridium phytofermentans (strain ATCC 700394 / DSM 18823 / ISDg) (Clostridium phytofermentans), this protein is Ribosomal protein L11 methyltransferase.